A 737-amino-acid polypeptide reads, in one-letter code: Dual specificity protein kinase KNS1 (737 aa).

2 disordered regions span residues 1 to 33 (MSQNIQIGTRKRSRANMNNSTTTGPANNTSSNK) and 270 to 290 (SSLRKFTSNGSSESASSNKSN). Residues 15 to 33 (ANMNNSTTTGPANNTSSNK) are compositionally biased toward polar residues. Low complexity predominate over residues 277–290 (SNGSSESASSNKSN). The region spanning 313-720 (FVVKDLLGQG…AKDALDHEWF (408 aa)) is the Protein kinase domain. Residues 319–327 (LGQGTFGKV) and K343 contribute to the ATP site. D440 functions as the Proton acceptor in the catalytic mechanism. Phosphothreonine is present on T562.

It belongs to the protein kinase superfamily. CMGC Ser/Thr protein kinase family. Lammer subfamily. In terms of processing, phosphorylated (auto-) on Ser/Thr/Tyr.

The enzyme catalyses L-seryl-[protein] + ATP = O-phospho-L-seryl-[protein] + ADP + H(+). The catalysed reaction is L-threonyl-[protein] + ATP = O-phospho-L-threonyl-[protein] + ADP + H(+). It carries out the reaction L-tyrosyl-[protein] + ATP = O-phospho-L-tyrosyl-[protein] + ADP + H(+). Nonessential protein kinase. The polypeptide is Dual specificity protein kinase KNS1 (KNS1) (Saccharomyces cerevisiae (strain ATCC 204508 / S288c) (Baker's yeast)).